Consider the following 535-residue polypeptide: MYTRNLLWLVSLVSAAPLYAADVPANTPLAPQQVFRYNNHSDPGTLDPQKVEENTAAQIVLDLFEGLVWMDGEGQVQPAQAERWEILDGGKRYIFHLRSGLQWSDGQPLTAEDFVLGWQRAVDPKTASPFAGYLAQAHINNAAAIVAGKADVTSLGVKATDDRTLEVTLEQPVPWFTTMLAWPTLFPVPHHVIAKHGDSWSKPENMVYNGAFVLDQWVVNEKITARKNPKYRDAQHTVLQQVEYLALDNSVTGYNRYRAGEVDLTWVPAQQIPAIEKSLPGELRIIPRLNSEYYNFNLEKPPFNDVRVRRALYLTVDRQLIAQKVLGLRTPATTLTPPEVKGFSATTFDELQKPMSERVAMAKALLKQAGYDASHPLRFELFYNKYDLHEKTAIALSSEWKKWLGAQVTLRTMEWKTYLDARRAGDFMLSRQSWDATYNDASSFLNTLKSDSEENVGHWKNAQYDALLNQATQITDATKRNALYQQAEVIINQQAPLIPIYYQPLIKLLKPYVGGFPLHNPQDYVYSKELYIKAH.

An N-terminal signal peptide occupies residues 1-20; the sequence is MYTRNLLWLVSLVSAAPLYA.

Belongs to the bacterial solute-binding protein 5 family.

The protein resides in the periplasm. Probably part of a deoxycholate transport system. Its expression in the presence of deoxycholate in a ygiS deletion mutant increases intracellular deoxycholate levels and decreases cell growth; higher expression in the presence of deoxycholate inhibits cell growth completely. Bile acid detergents such as deoxycholate are important for host defense against bacterial growth in the gall bladder and duodenum. The chain is Probable deoxycholate-binding periplasmic protein YgiS (ygiS) from Escherichia coli (strain K12).